Consider the following 72-residue polypeptide: Gas vesicle protein A (72 aa).

Belongs to the gas vesicle GvpA family. As to quaternary structure, the gas vesicle shell is 2 nm thick and consists of a single layer of this protein. It forms helical ribs nearly perpendicular to the long axis of the vesicle.

It is found in the gas vesicle shell. Its function is as follows. Gas vesicles are hollow, gas filled proteinaceous nanostructures found in some microorganisms. During planktonic growth they allow positioning of the organism at a favorable depth for light or nutrient acquisition. GvpA forms the protein shell. This is Gas vesicle protein A from Planktothrix agardhii (Oscillatoria agardhii).